The chain runs to 174 residues: 3-hydroxydecanoyl-[acyl-carrier-protein] dehydratase (174 aa).

Residue histidine 73 is part of the active site.

Belongs to the thioester dehydratase family. FabA subfamily. Homodimer.

It is found in the cytoplasm. The enzyme catalyses a (3R)-hydroxyacyl-[ACP] = a (2E)-enoyl-[ACP] + H2O. It catalyses the reaction (3R)-hydroxydecanoyl-[ACP] = (2E)-decenoyl-[ACP] + H2O. The catalysed reaction is (2E)-decenoyl-[ACP] = (3Z)-decenoyl-[ACP]. It participates in lipid metabolism; fatty acid biosynthesis. Functionally, necessary for the introduction of cis unsaturation into fatty acids. Catalyzes the dehydration of (3R)-3-hydroxydecanoyl-ACP to E-(2)-decenoyl-ACP and then its isomerization to Z-(3)-decenoyl-ACP. Can catalyze the dehydratase reaction for beta-hydroxyacyl-ACPs with saturated chain lengths up to 16:0, being most active on intermediate chain length. The protein is 3-hydroxydecanoyl-[acyl-carrier-protein] dehydratase of Saccharophagus degradans (strain 2-40 / ATCC 43961 / DSM 17024).